The chain runs to 151 residues: MFQDPRERPRTIHELCEALNTPLQSLQVQCVYCKKTLEWADVYNFAICDLRIVYRNDSAYGACKKCIIFYSKIIEYRRYTSSVYGATLEARPKRSLCNLLIRCHRCQIPLGPEEKQRIVDEKRRFHEIAGYWKGLCTNCWRPRREATETQV.

Zinc fingers lie at residues 30–66 (CVYC…CKKC) and 103–139 (CHRC…CTNC). A PDZ-binding domain motif is present at residues 149–151 (TQV).

This sequence belongs to the papillomaviridae E6 protein family. Forms homodimers. Interacts with ubiquitin-protein ligase UBE3A/E6-AP and thus forms a complex with human TP53. Interacts with human NFX1 and MAGI3. Interacts with human IRF3; this interaction inhibits the establishment of antiviral state. Interacts with human TYK2; this interaction inhibits JAK-STAT activation by interferon alpha. Interacts with host DLG1; this interaction leads to the proteasomal degradation of DLG1.

Its subcellular location is the host cytoplasm. It is found in the host nucleus. Its function is as follows. Plays a major role in the induction and maintenance of cellular transformation. Acts mainly as an oncoprotein by stimulating the destruction of many host cell key regulatory proteins. E6 associates with host UBE3A/E6-AP ubiquitin-protein ligase, and inactivates tumor suppressors TP53 and TP73 by targeting them to the 26S proteasome for degradation. In turn, DNA damage and chromosomal instabilities increase and lead to cell proliferation and cancer development. The complex E6/E6AP targets several other substrates to degradation via the proteasome including host DLG1 or NFX1, a repressor of human telomerase reverse transcriptase (hTERT). The resulting increased expression of hTERT prevents the shortening of telomere length leading to cell immortalization. Other cellular targets including BAK1, Fas-associated death domain-containing protein (FADD) and procaspase 8, are degraded by E6/E6AP causing inhibition of apoptosis. E6 also inhibits immune response by interacting with host IRF3 and TYK2. These interactions prevent IRF3 transcriptional activities and inhibit TYK2-mediated JAK-STAT activation by interferon alpha resulting in inhibition of the interferon signaling pathway. This Homo sapiens (Human) protein is Protein E6.